A 773-amino-acid polypeptide reads, in one-letter code: DC-STAMP domain-containing protein 2 (773 aa).

Residues 1 to 26 (MPKVMKDVVHPLGGEEPSMARAVVRS) are Cytoplasmic-facing. A helical membrane pass occupies residues 27–47 (VGGFTLGLSLATAYGLLELLV). Residues 48 to 51 (EGHS) are Extracellular-facing. The helical transmembrane segment at 52–72 (PWGCLVGTLTLAAFLSLGMGF) threads the bilayer. Residues 73-233 (SRQVRATVLL…IPQAYHLCYV (161 aa)) are Cytoplasmic-facing. A helical membrane pass occupies residues 234 to 254 (LMPFKLALCGLASLVQVFCVI). Over 255-322 (PKYIQPFLRQ…SMKLHRVREA (68 aa)) the chain is Extracellular. Residues asparagine 284 and asparagine 296 are each glycosylated (N-linked (GlcNAc...) asparagine). Residues 323–343 (LALMGFTTPLLLVLLYLQALF) traverse the membrane as a helical segment. The Cytoplasmic portion of the chain corresponds to 344-415 (YRYCYLNWDH…ILETFNLIRH (72 aa)). A helical membrane pass occupies residues 416–436 (LLLVLFLVFLDYAVFWVLDLA). Over 437-499 (RHQLQGEIVA…LRPSEPDSTG (63 aa)) the chain is Extracellular. Asparagine 480 carries an N-linked (GlcNAc...) asparagine glycan. Residues 500–520 (YIVIGVMYGLCFFITLFGSYV) traverse the membrane as a helical segment. The Cytoplasmic segment spans residues 521-773 (SRLRRVICAS…LPDPSHPPPK (253 aa)). Residues 692–701 (SLSMESTSES) are compositionally biased toward low complexity. The disordered stretch occupies residues 692 to 773 (SLSMESTSES…LPDPSHPPPK (82 aa)). The span at 758–773 (PLSPPSLPDPSHPPPK) shows a compositional bias: pro residues.

As to quaternary structure, interacts with DCST1.

It is found in the cytoplasmic vesicle. It localises to the secretory vesicle. Its subcellular location is the acrosome membrane. Its function is as follows. Essential sperm cell-surface protein required for sperm-egg fusion and fertilization. The sequence is that of DC-STAMP domain-containing protein 2 (DCST2) from Homo sapiens (Human).